Consider the following 119-residue polypeptide: Large ribosomal subunit protein bL20 (119 aa).

This sequence belongs to the bacterial ribosomal protein bL20 family.

In terms of biological role, binds directly to 23S ribosomal RNA and is necessary for the in vitro assembly process of the 50S ribosomal subunit. It is not involved in the protein synthesizing functions of that subunit. In Caldanaerobacter subterraneus subsp. tengcongensis (strain DSM 15242 / JCM 11007 / NBRC 100824 / MB4) (Thermoanaerobacter tengcongensis), this protein is Large ribosomal subunit protein bL20.